The sequence spans 495 residues: Leucine aminopeptidase 2 (495 aa).

A signal peptide spans 1–21 (MKTQLLSLGVALTAISQGVIA). A PA domain is found at 124–218 (PPADKITAEL…ADGKNLASLV (95 aa)). 2 N-linked (GlcNAc...) asparagine glycosylation sites follow: N142 and N235. 2 residues coordinate Zn(2+): H259 and D271. N-linked (GlcNAc...) asparagine glycosylation is present at N272. E303 serves as the catalytic Proton acceptor. Residues E304 and D332 each contribute to the Zn(2+) site. N352 carries N-linked (GlcNAc...) asparagine glycosylation. H430 contacts Zn(2+). Residues 464 to 495 (GFPTRPKTGKRDVSPRGQSMPGGGCGHHSVFM) form a disordered region.

Belongs to the peptidase M28 family. M28A subfamily. Monomer. The cofactor is Zn(2+).

The protein resides in the secreted. Functionally, extracellular aminopeptidase that releases a wide variety of amino acids from natural peptides and contributes to pathogenicity. This is Leucine aminopeptidase 2 (LAP2) from Arthroderma otae (strain ATCC MYA-4605 / CBS 113480) (Microsporum canis).